A 267-amino-acid chain; its full sequence is 1-(5-phosphoribosyl)-5-[(5-phosphoribosylamino)methylideneamino] imidazole-4-carboxamide isomerase (267 aa).

It belongs to the HisA/HisF family.

It localises to the cytoplasm. The catalysed reaction is 1-(5-phospho-beta-D-ribosyl)-5-[(5-phospho-beta-D-ribosylamino)methylideneamino]imidazole-4-carboxamide = 5-[(5-phospho-1-deoxy-D-ribulos-1-ylimino)methylamino]-1-(5-phospho-beta-D-ribosyl)imidazole-4-carboxamide. Its pathway is amino-acid biosynthesis; L-histidine biosynthesis; L-histidine from 5-phospho-alpha-D-ribose 1-diphosphate: step 4/9. This chain is 1-(5-phosphoribosyl)-5-[(5-phosphoribosylamino)methylideneamino] imidazole-4-carboxamide isomerase (HIS6), found in Kluyveromyces lactis (strain ATCC 8585 / CBS 2359 / DSM 70799 / NBRC 1267 / NRRL Y-1140 / WM37) (Yeast).